Consider the following 394-residue polypeptide: LL-diaminopimelate aminotransferase (394 aa).

Substrate is bound by residues Y14 and G41. Residues Y71, A104–K105, Y128, N174, Y205, and S233–S235 each bind pyridoxal 5'-phosphate. Substrate contacts are provided by K105, Y128, and N174. K236 bears the N6-(pyridoxal phosphate)lysine mark. Residues R244 and N275 each coordinate pyridoxal 5'-phosphate. 2 residues coordinate substrate: N275 and R369.

The protein belongs to the class-I pyridoxal-phosphate-dependent aminotransferase family. LL-diaminopimelate aminotransferase subfamily. In terms of assembly, homodimer. Requires pyridoxal 5'-phosphate as cofactor.

It catalyses the reaction (2S,6S)-2,6-diaminopimelate + 2-oxoglutarate = (S)-2,3,4,5-tetrahydrodipicolinate + L-glutamate + H2O + H(+). It participates in amino-acid biosynthesis; L-lysine biosynthesis via DAP pathway; LL-2,6-diaminopimelate from (S)-tetrahydrodipicolinate (aminotransferase route): step 1/1. Involved in the synthesis of meso-diaminopimelate (m-DAP or DL-DAP), required for both lysine and peptidoglycan biosynthesis. Catalyzes the direct conversion of tetrahydrodipicolinate to LL-diaminopimelate. Is also able to use meso-diaminopimelate, cystathionine, lysine or ornithine as substrates. The polypeptide is LL-diaminopimelate aminotransferase (Chlamydia trachomatis serovar D (strain ATCC VR-885 / DSM 19411 / UW-3/Cx)).